Here is a 516-residue protein sequence, read N- to C-terminus: Bifunctional purine biosynthesis protein PurH (516 aa).

The MGS-like domain maps to 1 to 150; it reads MSDDRKQIKR…KNHPSVAVVV (150 aa).

This sequence belongs to the PurH family.

It catalyses the reaction (6R)-10-formyltetrahydrofolate + 5-amino-1-(5-phospho-beta-D-ribosyl)imidazole-4-carboxamide = 5-formamido-1-(5-phospho-D-ribosyl)imidazole-4-carboxamide + (6S)-5,6,7,8-tetrahydrofolate. The enzyme catalyses IMP + H2O = 5-formamido-1-(5-phospho-D-ribosyl)imidazole-4-carboxamide. The protein operates within purine metabolism; IMP biosynthesis via de novo pathway; 5-formamido-1-(5-phospho-D-ribosyl)imidazole-4-carboxamide from 5-amino-1-(5-phospho-D-ribosyl)imidazole-4-carboxamide (10-formyl THF route): step 1/1. It participates in purine metabolism; IMP biosynthesis via de novo pathway; IMP from 5-formamido-1-(5-phospho-D-ribosyl)imidazole-4-carboxamide: step 1/1. This chain is Bifunctional purine biosynthesis protein PurH, found in Corynebacterium ammoniagenes (Brevibacterium ammoniagenes).